The following is a 323-amino-acid chain: Beta-ketoacyl-[acyl-carrier-protein] synthase III (323 aa).

Residues cysteine 114 and histidine 250 contribute to the active site. Positions 251 to 255 (QANKR) are ACP-binding. The active site involves asparagine 280.

The protein belongs to the thiolase-like superfamily. FabH family. As to quaternary structure, homodimer.

Its subcellular location is the cytoplasm. It carries out the reaction malonyl-[ACP] + acetyl-CoA + H(+) = 3-oxobutanoyl-[ACP] + CO2 + CoA. It functions in the pathway lipid metabolism; fatty acid biosynthesis. Its function is as follows. Catalyzes the condensation reaction of fatty acid synthesis by the addition to an acyl acceptor of two carbons from malonyl-ACP. Catalyzes the first condensation reaction which initiates fatty acid synthesis and may therefore play a role in governing the total rate of fatty acid production. Possesses both acetoacetyl-ACP synthase and acetyl transacylase activities. Its substrate specificity determines the biosynthesis of branched-chain and/or straight-chain of fatty acids. In Hyphomonas neptunium (strain ATCC 15444), this protein is Beta-ketoacyl-[acyl-carrier-protein] synthase III.